The following is a 135-amino-acid chain: Succinate dehydrogenase assembly factor 3, mitochondrial (135 aa).

The transit peptide at 1–12 (MRIFTRLLYAAP) directs the protein to the mitochondrion.

It belongs to the complex I LYR family. SDHAF3 subfamily. Interacts with the iron-sulfur protein subunit within the SDH catalytic dimer.

It is found in the mitochondrion matrix. Its function is as follows. Plays an essential role in the assembly of succinate dehydrogenase (SDH), an enzyme complex (also referred to as respiratory complex II) that is a component of both the tricarboxylic acid (TCA) cycle and the mitochondrial electron transport chain, and which couples the oxidation of succinate to fumarate with the reduction of ubiquinone (coenzyme Q) to ubiquinol. Promotes maturation of the iron-sulfur protein subunit of the SDH catalytic dimer, protecting it from the deleterious effects of oxidants. May act together with SDHAF1. The polypeptide is Succinate dehydrogenase assembly factor 3, mitochondrial (Emericella nidulans (strain FGSC A4 / ATCC 38163 / CBS 112.46 / NRRL 194 / M139) (Aspergillus nidulans)).